Here is a 98-residue protein sequence, read N- to C-terminus: Protein S100-A13 (98 aa).

Residues T18–V53 form the EF-hand domain. Positions 32, 37, 64, 66, 68, 70, and 75 each coordinate Ca(2+). S32 is subject to Phosphoserine.

This sequence belongs to the S-100 family. Homodimer. Part of a copper-dependent multiprotein complex containing S100A13, FGF1 and SYT1. Interacts with FGF1 and SYT1. Interacts with IL1A. As to expression, expressed in heart and skeletal muscle.

Its subcellular location is the cytoplasm. The protein localises to the secreted. In terms of biological role, plays a role in the export of proteins that lack a signal peptide and are secreted by an alternative pathway. Binds two calcium ions per subunit. Binds one copper ion. Binding of one copper ion does not interfere with calcium binding. Required for the copper-dependent stress-induced export of IL1A and FGF1. The calcium-free protein binds to lipid vesicles containing phosphatidylserine, but not to vesicles containing phosphatidylcholine. This chain is Protein S100-A13 (S100A13), found in Homo sapiens (Human).